The primary structure comprises 347 residues: Chaperone protein DnaJ 1 (347 aa).

Residues aspartate 5 to alanine 75 enclose the J domain. A compositionally biased stretch (low complexity) spans alanine 68 to aspartate 77. Residues alanine 68–alanine 91 form a disordered region. Residues glycine 107–alanine 181 form a CR-type zinc finger. Residues cysteine 120, cysteine 123, cysteine 137, cysteine 140, cysteine 155, cysteine 158, cysteine 169, and cysteine 172 each contribute to the Zn(2+) site. CXXCXGXG motif repeat units follow at residues cysteine 120–glycine 127, cysteine 137–glycine 144, cysteine 155–glycine 162, and cysteine 169–glycine 176.

It belongs to the DnaJ family. In terms of assembly, homodimer. The cofactor is Zn(2+).

The protein resides in the cytoplasm. Participates actively in the response to hyperosmotic and heat shock by preventing the aggregation of stress-denatured proteins and by disaggregating proteins, also in an autonomous, DnaK-independent fashion. Unfolded proteins bind initially to DnaJ; upon interaction with the DnaJ-bound protein, DnaK hydrolyzes its bound ATP, resulting in the formation of a stable complex. GrpE releases ADP from DnaK; ATP binding to DnaK triggers the release of the substrate protein, thus completing the reaction cycle. Several rounds of ATP-dependent interactions between DnaJ, DnaK and GrpE are required for fully efficient folding. Also involved, together with DnaK and GrpE, in the DNA replication of plasmids through activation of initiation proteins. The polypeptide is Chaperone protein DnaJ 1 (Aromatoleum aromaticum (strain DSM 19018 / LMG 30748 / EbN1) (Azoarcus sp. (strain EbN1))).